A 129-amino-acid chain; its full sequence is Small ribosomal subunit protein uS11 (129 aa).

It belongs to the universal ribosomal protein uS11 family. Part of the 30S ribosomal subunit. Interacts with proteins S7 and S18. Binds to IF-3.

Functionally, located on the platform of the 30S subunit, it bridges several disparate RNA helices of the 16S rRNA. Forms part of the Shine-Dalgarno cleft in the 70S ribosome. In Aliivibrio fischeri (strain ATCC 700601 / ES114) (Vibrio fischeri), this protein is Small ribosomal subunit protein uS11.